The chain runs to 379 residues: Oxidoreductase chry3 (379 aa).

Disordered stretches follow at residues 1 to 23 (MTTA…QPTP) and 126 to 150 (EGDD…TSHM). The segment covering 126-138 (EGDDSAPAEEEAD) has biased composition (acidic residues).

Belongs to the asaB hydroxylase/desaturase family.

It participates in pigment biosynthesis. Its function is as follows. Oxidoreductase; part of the gene cluster that mediates the biosynthesis of the yellow pigment chrysogine. Pyruvic acid and anthranilic acid are likely substrates for the nonribosomal peptide synthetase chry1/NRPS14, with pyruvic acid adenylated by the first A domain and anthranilic acid by the second. If pyruvic acid and anthranilic acid are merged and released from chry1/NRPS14 by hydrolysis, a subsequent amidation would lead to 2-pyruvoylaminobenzamide. This process is probably catalyzed by the amidotransferase chry2 using glutamine as amino donor. The dehydrogenase chry5 that has a terminal berberine bridge domain for C-N cyclization could catalyze the cyclization of 2-pyruvoylaminobenzamide to yield acetyl-4(3H)-quinazolidinone. A final reduction of acetyl-4(3H)-quinazolidinone catalyzed by the oxidoreductase chry4 would result in chrysogine. This is Oxidoreductase chry3 from Gibberella zeae (strain ATCC MYA-4620 / CBS 123657 / FGSC 9075 / NRRL 31084 / PH-1) (Wheat head blight fungus).